A 469-amino-acid polypeptide reads, in one-letter code: Protein YfjI (469 aa).

This is Protein YfjI (yfjI) from Escherichia coli (strain K12).